A 138-amino-acid chain; its full sequence is Transcription antitermination protein NusB (138 aa).

This sequence belongs to the NusB family.

Its function is as follows. Involved in transcription antitermination. Required for transcription of ribosomal RNA (rRNA) genes. Binds specifically to the boxA antiterminator sequence of the ribosomal RNA (rrn) operons. This chain is Transcription antitermination protein NusB, found in Photorhabdus laumondii subsp. laumondii (strain DSM 15139 / CIP 105565 / TT01) (Photorhabdus luminescens subsp. laumondii).